We begin with the raw amino-acid sequence, 435 residues long: Serine--tRNA ligase (435 aa).

233–235 (TAE) is an L-serine binding site. Residue 264–266 (RAE) participates in ATP binding. Residue Glu287 participates in L-serine binding. An ATP-binding site is contributed by 351–354 (EISS). Ser386 serves as a coordination point for L-serine.

Belongs to the class-II aminoacyl-tRNA synthetase family. Type-1 seryl-tRNA synthetase subfamily. As to quaternary structure, homodimer. The tRNA molecule binds across the dimer.

It is found in the cytoplasm. It carries out the reaction tRNA(Ser) + L-serine + ATP = L-seryl-tRNA(Ser) + AMP + diphosphate + H(+). The enzyme catalyses tRNA(Sec) + L-serine + ATP = L-seryl-tRNA(Sec) + AMP + diphosphate + H(+). The protein operates within aminoacyl-tRNA biosynthesis; selenocysteinyl-tRNA(Sec) biosynthesis; L-seryl-tRNA(Sec) from L-serine and tRNA(Sec): step 1/1. In terms of biological role, catalyzes the attachment of serine to tRNA(Ser). Is also able to aminoacylate tRNA(Sec) with serine, to form the misacylated tRNA L-seryl-tRNA(Sec), which will be further converted into selenocysteinyl-tRNA(Sec). This chain is Serine--tRNA ligase, found in Anaeromyxobacter sp. (strain K).